The following is a 581-amino-acid chain: Probable CDP-diacylglycerol--glycerol-3-phosphate 3-phosphatidyltransferase (581 aa).

Residues 27–65 (RSATTTTTTTTKACGNGSSQSPPSTPLLSSKSSTITSNK) are disordered. Positions 44 to 65 (SSQSPPSTPLLSSKSSTITSNK) are enriched in low complexity. Residue 160–167 (ASLYLGTS) coordinates ATP. PLD phosphodiesterase domains lie at 248-274 (TIGVQHIKTYIFDDDLLLSGANLSKDY) and 487-520 (DKWTYHAKGLWIQVKNQQHPSITLIGSPNFGSRS). Catalysis depends on residues histidine 253, lysine 255, and aspartate 260.

The protein belongs to the CDP-alcohol phosphatidyltransferase class-II family.

The catalysed reaction is a CDP-1,2-diacyl-sn-glycerol + sn-glycerol 3-phosphate = a 1,2-diacyl-sn-glycero-3-phospho-(1'-sn-glycero-3'-phosphate) + CMP + H(+). It functions in the pathway phospholipid metabolism; phosphatidylglycerol biosynthesis; phosphatidylglycerol from CDP-diacylglycerol: step 1/2. Functions in the biosynthesis of the anionic phospholipids phosphatidylglycerol and cardiolipin. This Dictyostelium discoideum (Social amoeba) protein is Probable CDP-diacylglycerol--glycerol-3-phosphate 3-phosphatidyltransferase (pgs1).